We begin with the raw amino-acid sequence, 26 residues long: Nicotinic acetylcholine receptor-binding protein Mnn-1A (26 aa).

C3 and C22 form a disulfide bridge.

It belongs to the three-finger toxin family. Short-chain subfamily. As to expression, expressed by the venom gland.

It localises to the secreted. Functionally, binds and may inhibit nicotinic acetylcholine receptors (nAChR). The sequence is that of Nicotinic acetylcholine receptor-binding protein Mnn-1A from Micrurus nigrocinctus (Central American coral snake).